Here is a 24-residue protein sequence, read N- to C-terminus: Unknown protein NF004 from 2D-PAGE (24 aa).

This is Unknown protein NF004 from 2D-PAGE from Naegleria fowleri (Brain eating amoeba).